The primary structure comprises 185 residues: Ribosome-recycling factor (185 aa).

Positions 136-161 (MDSLKTDEKKGEIGEDDRKRRETEVQ) are disordered.

It belongs to the RRF family.

It localises to the cytoplasm. Its function is as follows. Responsible for the release of ribosomes from messenger RNA at the termination of protein biosynthesis. May increase the efficiency of translation by recycling ribosomes from one round of translation to another. This Rhizorhabdus wittichii (strain DSM 6014 / CCUG 31198 / JCM 15750 / NBRC 105917 / EY 4224 / RW1) (Sphingomonas wittichii) protein is Ribosome-recycling factor.